The following is a 318-amino-acid chain: MFLINTLLLILPVLLAMAFLTLVERKILGYMQLRKGPNIVGPYGLLQPIADAIKLFTKEPLRPLTSSPLLFIIAPTLALTLALSMWLPIPMPYPLVNLNMGILFILATSSLAVYSILWSGWASNSKYALFGALRAVAQTISYEVTLAIILLCILLMNGSFTLSSLITTQEYMWILLPAWPLAMMWFISTLAETNRAPFDLTEGESELVSGFNVEYAGGPFALFFLAEYTNIILMNALTAILFLGSFHSHTNPEMFTVNFATKTLLLTMTFLWIRASYPRFRYDQLMHLLWKSFLPLTLALCMWHISMPIMLSSIPPQM.

8 helical membrane-spanning segments follow: residues 2-22 (FLINTLLLILPVLLAMAFLTL), 69-89 (LLFIIAPTLALTLALSMWLPI), 102-122 (ILFILATSSLAVYSILWSGWA), 146-166 (LAIILLCILLMNGSFTLSSLI), 171-191 (YMWILLPAWPLAMMWFISTLA), 222-242 (LFFLAEYTNIILMNALTAILF), 253-273 (EMFTVNFATKTLLLTMTFLWI), and 294-314 (LPLTLALCMWHISMPIMLSSI).

The protein belongs to the complex I subunit 1 family. As to quaternary structure, core subunit of respiratory chain NADH dehydrogenase (Complex I) which is composed of 45 different subunits.

The protein localises to the mitochondrion inner membrane. The catalysed reaction is a ubiquinone + NADH + 5 H(+)(in) = a ubiquinol + NAD(+) + 4 H(+)(out). Its function is as follows. Core subunit of the mitochondrial membrane respiratory chain NADH dehydrogenase (Complex I) which catalyzes electron transfer from NADH through the respiratory chain, using ubiquinone as an electron acceptor. Essential for the catalytic activity and assembly of complex I. This is NADH-ubiquinone oxidoreductase chain 1 (MT-ND1) from Oryctolagus cuniculus (Rabbit).